The sequence spans 331 residues: Sucrose operon repressor (331 aa).

One can recognise an HTH lacI-type domain in the interval 1-56 (MASLKDVARLAGVSMMTVSRVMHNAESVRPATRDRVLQAIQTLNYVPDLSARKMRA). Positions 4–23 (LKDVARLAGVSMMTVSRVMH) form a DNA-binding region, H-T-H motif.

In terms of biological role, repressor for the csc operon. Binds D-fructose as an inducer. This chain is Sucrose operon repressor (cscR), found in Escherichia coli.